A 456-amino-acid chain; its full sequence is tRNA modification GTPase MnmE (456 aa).

Residues Arg-23, Glu-80, and Lys-122 each contribute to the (6S)-5-formyl-5,6,7,8-tetrahydrofolate site. A TrmE-type G domain is found at 218 to 380 (AKRIVIVGPP…LKKHLSNRQK (163 aa)). Asn-228 serves as a coordination point for K(+). Residues 228 to 233 (NAGKSS), 247 to 253 (TDLPGTT), and 272 to 275 (DTAG) contribute to the GTP site. Ser-232 contacts Mg(2+). Residues Thr-247, Leu-249, and Thr-252 each coordinate K(+). Thr-253 lines the Mg(2+) pocket. Residue Lys-456 participates in (6S)-5-formyl-5,6,7,8-tetrahydrofolate binding.

The protein belongs to the TRAFAC class TrmE-Era-EngA-EngB-Septin-like GTPase superfamily. TrmE GTPase family. In terms of assembly, homodimer. Heterotetramer of two MnmE and two MnmG subunits. The cofactor is K(+).

The protein localises to the cytoplasm. In terms of biological role, exhibits a very high intrinsic GTPase hydrolysis rate. Involved in the addition of a carboxymethylaminomethyl (cmnm) group at the wobble position (U34) of certain tRNAs, forming tRNA-cmnm(5)s(2)U34. This chain is tRNA modification GTPase MnmE, found in Buchnera aphidicola subsp. Schizaphis graminum (strain Sg).